The chain runs to 314 residues: Acetaldehyde dehydrogenase 1 (314 aa).

Residue 11-14 participates in NAD(+) binding; it reads SGNI. Catalysis depends on C129, which acts as the Acyl-thioester intermediate. NAD(+)-binding positions include 160-168 and N292; that span reads SAGPGTRAN.

This sequence belongs to the acetaldehyde dehydrogenase family.

It catalyses the reaction acetaldehyde + NAD(+) + CoA = acetyl-CoA + NADH + H(+). The chain is Acetaldehyde dehydrogenase 1 from Nocardioides sp. (strain ATCC BAA-499 / JS614).